We begin with the raw amino-acid sequence, 196 residues long: CASP-like protein 2A2 (196 aa).

The Cytoplasmic portion of the chain corresponds to 1-26 (MAQGKESVSVVEMEGSGNGPAVEMRH). A helical transmembrane segment spans residues 27-47 (FETLFRLLPVGLCISALVLML). The Extracellular segment spans residues 48–68 (KSEQSDQYMQLDYSNVDAFRC). Residues 69 to 89 (LAYANGICAGYSLISAFDSMV) traverse the membrane as a helical segment. The Cytoplasmic portion of the chain corresponds to 90 to 98 (PVSHHISRS). Residues 99-119 (WILFLLDQGITYLMLAGGAVA) form a helical membrane-spanning segment. The Extracellular segment spans residues 120 to 148 (TQVLYVAYKGDEKATWEQICGSYGRFCNR). Residues 149-169 (AGASVIISFFALVCFLLLSLL) form a helical membrane-spanning segment. At 170–196 (SAYRLFSKYDPPIHGGAKLEDQTTAQI) the chain is on the cytoplasmic side.

This sequence belongs to the Casparian strip membrane proteins (CASP) family. Homodimer and heterodimers.

It localises to the cell membrane. This chain is CASP-like protein 2A2, found in Picea sitchensis (Sitka spruce).